The following is a 106-amino-acid chain: Insulin-2 (106 aa).

An N-terminal signal peptide occupies residues 1–23; the sequence is MALWMQCLPLVLVLLFSTPNTEA. Cystine bridges form between Cys30–Cys92, Cys42–Cys105, and Cys91–Cys96. The propeptide at 56-83 is c peptide; that stretch reads DIEQAQVNGPQDNELDGMQFQPQEYQKM.

Belongs to the insulin family. In terms of assembly, heterodimer of a B chain and an A chain linked by two disulfide bonds.

The protein resides in the secreted. Insulin decreases blood glucose concentration. It increases cell permeability to monosaccharides, amino acids and fatty acids. It accelerates glycolysis, the pentose phosphate cycle, and glycogen synthesis in liver. This Xenopus laevis (African clawed frog) protein is Insulin-2 (ins-b).